The chain runs to 205 residues: High frequency lysogenization protein HflD homolog (205 aa).

This sequence belongs to the HflD family.

The protein resides in the cytoplasm. It localises to the cell inner membrane. The polypeptide is High frequency lysogenization protein HflD homolog (Vibrio campbellii (strain ATCC BAA-1116)).